The chain runs to 170 residues: uncharacterized protein (170 aa).

A signal peptide spans 1–28 (MTGGVMSQKFVVGAGLLVCSVCSLSAMA).

Belongs to the fimbrial protein family.

Part of the yfcOPQRSUV fimbrial operon. Could contribute to adhesion to various surfaces in specific environmental niches. Increases adhesion to eukaryotic T24 bladder epithelial cells in the absence of fim genes. This is an uncharacterized protein from Escherichia coli (strain K12).